The sequence spans 403 residues: S-arrestin (403 aa).

Residues 11–19 (HVIFKKVSR) are interaction with RHO. A Phosphothreonine modification is found at Thr231. The interval 381-403 (RQNLKDTGENTEGKKDEDAGQDE) is disordered.

It belongs to the arrestin family. As to quaternary structure, monomer. Homodimer. Homotetramer. Interacts with RHO (via the phosphorylated C-terminus). Detected in retina (at protein level).

The protein localises to the cell projection. Its subcellular location is the cilium. It localises to the photoreceptor outer segment. It is found in the membrane. In terms of biological role, binds to photoactivated, phosphorylated RHO and terminates RHO signaling via G-proteins by competing with G-proteins for the same binding site on RHO. May play a role in preventing light-dependent degeneration of retinal photoreceptor cells. This chain is S-arrestin (Sag), found in Mus musculus (Mouse).